The sequence spans 296 residues: Ribosomal RNA small subunit methyltransferase A (296 aa).

Asn-32, Leu-34, Gly-59, Glu-80, Asp-105, and Asn-130 together coordinate S-adenosyl-L-methionine.

It belongs to the class I-like SAM-binding methyltransferase superfamily. rRNA adenine N(6)-methyltransferase family. RsmA subfamily.

It is found in the cytoplasm. The catalysed reaction is adenosine(1518)/adenosine(1519) in 16S rRNA + 4 S-adenosyl-L-methionine = N(6)-dimethyladenosine(1518)/N(6)-dimethyladenosine(1519) in 16S rRNA + 4 S-adenosyl-L-homocysteine + 4 H(+). Specifically dimethylates two adjacent adenosines (A1518 and A1519) in the loop of a conserved hairpin near the 3'-end of 16S rRNA in the 30S particle. May play a critical role in biogenesis of 30S subunits. The sequence is that of Ribosomal RNA small subunit methyltransferase A from Lactiplantibacillus plantarum (strain ATCC BAA-793 / NCIMB 8826 / WCFS1) (Lactobacillus plantarum).